Here is a 206-residue protein sequence, read N- to C-terminus: Ribosome maturation factor RimP (206 aa).

Belongs to the RimP family.

Its subcellular location is the cytoplasm. In terms of biological role, required for maturation of 30S ribosomal subunits. This chain is Ribosome maturation factor RimP, found in Paracoccus denitrificans (strain Pd 1222).